We begin with the raw amino-acid sequence, 362 residues long: Histidinol-phosphate aminotransferase (362 aa).

Lys-210 carries the post-translational modification N6-(pyridoxal phosphate)lysine.

It belongs to the class-II pyridoxal-phosphate-dependent aminotransferase family. Histidinol-phosphate aminotransferase subfamily. Homodimer. Pyridoxal 5'-phosphate serves as cofactor.

It carries out the reaction L-histidinol phosphate + 2-oxoglutarate = 3-(imidazol-4-yl)-2-oxopropyl phosphate + L-glutamate. It functions in the pathway amino-acid biosynthesis; L-histidine biosynthesis; L-histidine from 5-phospho-alpha-D-ribose 1-diphosphate: step 7/9. This chain is Histidinol-phosphate aminotransferase, found in Rhodopirellula baltica (strain DSM 10527 / NCIMB 13988 / SH1).